We begin with the raw amino-acid sequence, 135 residues long: S-protein homolog 20 (135 aa).

The first 26 residues, 1 to 26 (MNGSSAFHIILSVTFMVFLFGGLCEA), serve as a signal peptide directing secretion. The N-linked (GlcNAc...) asparagine glycan is linked to N88.

It belongs to the plant self-incompatibility (S1) protein family.

Its subcellular location is the secreted. In Arabidopsis thaliana (Mouse-ear cress), this protein is S-protein homolog 20.